Here is a 172-residue protein sequence, read N- to C-terminus: Adenylate kinase isoenzyme 6 (172 aa).

The ATP site is built by Gly-13, Gly-15, Lys-16, Thr-17, and Thr-18. The tract at residues 33 to 56 (NVGDLAREGQLYDGYDEEYGCPIL) is NMPbind. Residues 108–118 (TRGYNEKKLQD) form an LID region. Arg-109 contributes to the ATP binding site.

The protein belongs to the adenylate kinase family. AK6 subfamily. Monomer and homodimer. Interacts with small ribosomal subunit protein uS11. Not a structural component of 43S pre-ribosomes, but transiently interacts with them by binding to uS11. Interacts with COIL (via C-terminus).

Its subcellular location is the cytoplasm. It is found in the nucleus. The protein localises to the nucleoplasm. The protein resides in the cajal body. It carries out the reaction AMP + ATP = 2 ADP. The enzyme catalyses ATP + H2O = ADP + phosphate + H(+). Its function is as follows. Broad-specificity nucleoside monophosphate (NMP) kinase that catalyzes the reversible transfer of the terminal phosphate group between nucleoside triphosphates and monophosphates. Also has ATPase activity. Involved in the late cytoplasmic maturation steps of the 40S ribosomal particles, specifically 18S rRNA maturation. While NMP activity is not required for ribosome maturation, ATPase activity is. Associates transiently with small ribosomal subunit protein uS11. ATP hydrolysis breaks the interaction with uS11. May temporarily remove uS11 from the ribosome to enable a conformational change of the ribosomal RNA that is needed for the final maturation step of the small ribosomal subunit. Its NMP activity may have a role in nuclear energy homeostasis. May be involved in regulation of Cajal body (CB) formation. The chain is Adenylate kinase isoenzyme 6 from Mus musculus (Mouse).